The chain runs to 1323 residues: Tetratricopeptide repeat protein 21 homolog (1323 aa).

17 TPR repeats span residues 56–89 (VPLAILKGVCLVLLGKIPEAIRHLEAFSNDQNFS), 411–444 (ESPFYYLIASVLAKHSKDKSFENFRQHIENLIEM), 580–613 (SLYHLIKSKTFKKRNENDEALKTLKMALQIPKKE), 667–700 (HQLVIAQAQLYLTKGHTEKALAILRKIQPGQSNF), 702–735 (LSRIRMAEIYLEEKKDKRMFAACYRELLKVEPTP), 736–768 (GSYSLLGDAFMKVQEPEDAINFYEQALKMQSKD), 770–802 (QLAEKIGEAYVMAHLYSKAVNFYESSMNIYKDK), 804–835 (MRLKLANLLLRLKNYEKCEKILRAPLDREPEP), 845–878 (IQFLLLLAECHEMVENIPEAMKDFEKAKSLHNKI), 892–925 (ARICNLQAELYYRRHEFPPAIEVCKQALQFYETD), 927–959 (KSNLLLSRIYKDENKWTLVLQPCQAVLQVDPHN), 961–993 (EANLILADFYYIKSEADHAMTSYITLLNKNPLH), 995–1027 (HALFRVVELYCRKGEHHKADEFLNSARDANPRC), 1031–1064 (AGYSVCRGRFEWYTGDQSQALRCYSRAKDSPNVV), 1203–1236 (EKCWLLMAEIYVGASKWEQAGTYLDQVLKYNCNS), 1238–1270 (RAFELYGQAKEKEQKYVEASKIYEKAFNTTNQK), and 1272–1305 (CSFGYKLAFTLLKTRRLFLCIETCQKVLDINPQY).

The protein belongs to the TTC21 family.

The protein is Tetratricopeptide repeat protein 21 homolog of Caenorhabditis briggsae.